The primary structure comprises 240 residues: Zein-alpha A20 (240 aa).

The N-terminal stretch at 1–21 (MATKIFSLLMLLALSACVANA) is a signal peptide.

The protein belongs to the zein family.

In terms of biological role, zeins are major seed storage proteins. The polypeptide is Zein-alpha A20 (Zea mays (Maize)).